A 1279-amino-acid polypeptide reads, in one-letter code: ATP-dependent helicase/nuclease subunit A (1279 aa).

A UvrD-like helicase ATP-binding domain is found at 4–499 (TKWTDEQRQA…VKLFKNFRSR (496 aa)). 25-32 (AGAGAGKT) lines the ATP pocket. Residues 526-853 (EEALKVGASY…RIMSIHKSKG (328 aa)) enclose the UvrD-like helicase C-terminal domain.

It belongs to the helicase family. AddA subfamily. As to quaternary structure, heterodimer of AddA and AddB/RexB. Mg(2+) is required as a cofactor.

The catalysed reaction is Couples ATP hydrolysis with the unwinding of duplex DNA by translocating in the 3'-5' direction.. It catalyses the reaction ATP + H2O = ADP + phosphate + H(+). Functionally, the heterodimer acts as both an ATP-dependent DNA helicase and an ATP-dependent, dual-direction single-stranded exonuclease. Recognizes the chi site generating a DNA molecule suitable for the initiation of homologous recombination. The AddA nuclease domain is required for chi fragment generation; this subunit has the helicase and 3' -&gt; 5' nuclease activities. In Clostridium botulinum (strain Kyoto / Type A2), this protein is ATP-dependent helicase/nuclease subunit A.